A 293-amino-acid chain; its full sequence is Putative metal ABC transporter substrate-binding protein Hpf (293 aa).

Positions 1 to 22 (MRNSFKIMTALALGLFAMQANA) are cleaved as a signal peptide. The segment at 23 to 48 (KFKVVTTFTVIQDIAQNVAGNAATVE) is interaction with host components. A divalent metal cation is bound by residues histidine 58, histidine 123, glutamate 189, and aspartate 264.

The protein belongs to the bacterial solute-binding protein 9 family. In terms of assembly, interacts with host laminin and vitronectin. Can interact with both immobilized and soluble vitronectin.

The protein resides in the cell outer membrane. It is found in the cell surface. The protein localises to the periplasm. Its function is as follows. Part of an ATP-binding cassette (ABC) transport system involved in metal import. Binds a metal with high affinity and specificity and delivers it to the membrane permease for translocation into the cytoplasm. Acts as an adhesin that promotes binding of H.influenzae to host laminin and vitronectin. In addition, interaction with serum vitronectin plays an important role in bacterial serum resistance. The sequence is that of Putative metal ABC transporter substrate-binding protein Hpf (hpf) from Haemophilus influenzae (strain NTHi 3655).